The sequence spans 97 residues: UPF0729 protein GD16342 (97 aa).

Positions 64–97 (KPEKASVGPAEESQNPPLNAIAAETEVDESKKEI) are disordered. The residue at position 69 (Ser-69) is a Phosphoserine.

Belongs to the UPF0729 family.

In Drosophila simulans (Fruit fly), this protein is UPF0729 protein GD16342.